The primary structure comprises 371 residues: GPI mannosyltransferase 1 (371 aa).

8 helical membrane passes run phenylalanine 64–isoleucine 84, alanine 120–leucine 140, isoleucine 144–valine 164, isoleucine 190–glycine 210, alanine 248–phenylalanine 268, valine 290–serine 310, leucine 318–leucine 338, and serine 344–leucine 364.

Belongs to the PIGM family.

Its subcellular location is the endoplasmic reticulum membrane. The protein operates within glycolipid biosynthesis; glycosylphosphatidylinositol-anchor biosynthesis. In terms of biological role, mannosyltransferase involved in glycosylphosphatidylinositol-anchor biosynthesis. Transfers the first alpha-1,4-mannose to GlcN-acyl-PI during GPI precursor assembly. Required for cell wall integrity. The sequence is that of GPI mannosyltransferase 1 (gpi14) from Schizosaccharomyces pombe (strain 972 / ATCC 24843) (Fission yeast).